A 358-amino-acid chain; its full sequence is 3-dehydroquinate synthase (358 aa).

NAD(+)-binding positions include 104–108, 128–129, lysine 140, lysine 149, and 167–170; these read GVIGD, TT, and FLNT. 3 residues coordinate Zn(2+): glutamate 182, histidine 246, and histidine 260.

The protein belongs to the sugar phosphate cyclases superfamily. Dehydroquinate synthase family. Co(2+) is required as a cofactor. Zn(2+) serves as cofactor. Requires NAD(+) as cofactor.

It is found in the cytoplasm. The enzyme catalyses 7-phospho-2-dehydro-3-deoxy-D-arabino-heptonate = 3-dehydroquinate + phosphate. It functions in the pathway metabolic intermediate biosynthesis; chorismate biosynthesis; chorismate from D-erythrose 4-phosphate and phosphoenolpyruvate: step 2/7. Its function is as follows. Catalyzes the conversion of 3-deoxy-D-arabino-heptulosonate 7-phosphate (DAHP) to dehydroquinate (DHQ). The polypeptide is 3-dehydroquinate synthase (Staphylococcus carnosus (strain TM300)).